Here is a 261-residue protein sequence, read N- to C-terminus: Ribonuclease PH (261 aa).

Phosphate-binding positions include Arg-86 and 124–126 (GTR).

The protein belongs to the RNase PH family. Homohexameric ring arranged as a trimer of dimers.

It catalyses the reaction tRNA(n+1) + phosphate = tRNA(n) + a ribonucleoside 5'-diphosphate. In terms of biological role, phosphorolytic 3'-5' exoribonuclease that plays an important role in tRNA 3'-end maturation. Removes nucleotide residues following the 3'-CCA terminus of tRNAs; can also add nucleotides to the ends of RNA molecules by using nucleoside diphosphates as substrates, but this may not be physiologically important. Probably plays a role in initiation of 16S rRNA degradation (leading to ribosome degradation) during starvation. The sequence is that of Ribonuclease PH from Persephonella marina (strain DSM 14350 / EX-H1).